Consider the following 167-residue polypeptide: Protein FimG (167 aa).

The signal sequence occupies residues 1 to 23 (MKWCKRGYVLAAILALASATIQA). An intrachain disulfide couples Cys39 to Cys77.

The protein belongs to the fimbrial protein family.

It localises to the fimbrium. Functionally, involved in regulation of length and mediation of adhesion of type 1 fimbriae (but not necessary for the production of fimbriae). Involved in the integration of FimH in the fimbriae. The protein is Protein FimG (fimG) of Escherichia coli (strain K12).